The sequence spans 425 residues: Synaptotagmin-4 (425 aa).

Residues 1–16 (MAPITTSREEFDEIPT) are Vesicular-facing. The chain crosses the membrane as a helical span at residues 17 to 37 (VVGIFSAFGLVFTVSLFAWIC). Over 38-425 (CQRKSSKSNK…IAKWHVLCDG (388 aa)) the chain is Cytoplasmic. Residues 73–83 (FGADDKNEVKN) show a composition bias toward basic and acidic residues. Disordered stretches follow at residues 73–93 (FGAD…NSLH) and 127–147 (LEGE…SLTS). The residue at position 135 (S135) is a Phosphoserine; by MAPK8. The segment covering 135 to 146 (SPESLKSSTSLT) has biased composition (low complexity). C2 domains are found at residues 153-274 (KLGT…MLMN) and 287-420 (GRGE…AKWH). D246, S249, and D252 together coordinate Ca(2+).

It belongs to the synaptotagmin family. As to quaternary structure, interacts with KIF1A; the interaction increases in presence of calcium and decreases when SYT4 is phosphorylated at Ser-135. Ca(2+) serves as cofactor. Phosphorylation at Ser-135 by MAPK8/JNK1 reduces interaction with KIF1A and neuronal dense core vesicles mobility. As to expression, expressed in melanocytes. Expressed in brain. Within brain, expression is highest in hippocampus, with substantial levels also detected in amygdala and thalamus.

The protein resides in the cytoplasmic vesicle. Its subcellular location is the secretory vesicle. It is found in the neuronal dense core vesicle membrane. Synaptotagmin family member which does not bind Ca(2+). Involved in neuronal dense core vesicles (DCVs) mobility through its interaction with KIF1A. Upon increased neuronal activity, phosphorylation by MAPK8/JNK1 destabilizes the interaction with KIF1A and captures DCVs to synapses. Plays a role in dendrite formation by melanocytes. The polypeptide is Synaptotagmin-4 (SYT4) (Homo sapiens (Human)).